We begin with the raw amino-acid sequence, 633 residues long: tRNA uridine 5-carboxymethylaminomethyl modification enzyme MnmG (633 aa).

FAD contacts are provided by residues 15–20 (GAGHAG), Val127, and Ser182. NAD(+) is bound at residue 276 to 290 (GPRYCPSIEDKIVRF). An FAD-binding site is contributed by Gln373.

It belongs to the MnmG family. In terms of assembly, homodimer. Heterotetramer of two MnmE and two MnmG subunits. FAD serves as cofactor.

The protein resides in the cytoplasm. Its function is as follows. NAD-binding protein involved in the addition of a carboxymethylaminomethyl (cmnm) group at the wobble position (U34) of certain tRNAs, forming tRNA-cmnm(5)s(2)U34. The sequence is that of tRNA uridine 5-carboxymethylaminomethyl modification enzyme MnmG from Streptococcus thermophilus (strain CNRZ 1066).